The sequence spans 393 residues: 4-hydroxyphenylpyruvate dioxygenase (393 aa).

T2 carries the post-translational modification N-acetylthreonine. VOC domains lie at 18–149 (HFHS…LVEK) and 180–338 (IIDH…IFTK). K132 bears the N6-succinyllysine mark. H183 contacts Fe cation. Phosphoserine occurs at positions 211, 226, and 250. The Fe cation site is built by H266 and E349.

The protein belongs to the 4HPPD family. In terms of assembly, homodimer. Fe cation serves as cofactor.

It localises to the cytoplasm. Its subcellular location is the endoplasmic reticulum membrane. The protein resides in the golgi apparatus membrane. The catalysed reaction is 3-(4-hydroxyphenyl)pyruvate + O2 = homogentisate + CO2. The protein operates within amino-acid degradation; L-phenylalanine degradation; acetoacetate and fumarate from L-phenylalanine: step 3/6. Functionally, catalyzes the conversion of 4-hydroxyphenylpyruvic acid to homogentisic acid, one of the steps in tyrosine catabolism. This Mus musculus (Mouse) protein is 4-hydroxyphenylpyruvate dioxygenase (Hpd).